The chain runs to 305 residues: Ribosomal RNA small subunit methyltransferase H (305 aa).

Residues 33–35 (GGY), Asp-51, Phe-82, Asp-96, and Gln-103 contribute to the S-adenosyl-L-methionine site.

This sequence belongs to the methyltransferase superfamily. RsmH family.

It is found in the cytoplasm. It carries out the reaction cytidine(1402) in 16S rRNA + S-adenosyl-L-methionine = N(4)-methylcytidine(1402) in 16S rRNA + S-adenosyl-L-homocysteine + H(+). Specifically methylates the N4 position of cytidine in position 1402 (C1402) of 16S rRNA. The polypeptide is Ribosomal RNA small subunit methyltransferase H (Rickettsia bellii (strain OSU 85-389)).